The primary structure comprises 342 residues: MTLKAAILGASGYTGAELVRILATHPRIEIAALSADRKAGQGYDEVFPHLRHLKLPALVRMEEIDFSAIDLVFCALPHGLSQPLVGQLPRNVKIVDLGADFRLRDPADYKKWYGLDHAAPEVQPEAVYGLTEFYRDQIRGARLVAGTGCNAATVQFALRPLIGSGLIDLDDIICDLKNGVSGAGRSLKENMLFAERSEDVAGYSQGGKHRHLGEFDQEFSVLAGREVRIQFTPHLVPVNRGILASCYLKGEPQAVHAALAAAYADEPFIVVLPYGQLPAMAHVQGSNFCHIGVTGDRISGRALVVSTLDNLCKGSSGQAVQNANLMLGLPETEGLMLAPIFP.

Cys-149 is an active-site residue.

Belongs to the NAGSA dehydrogenase family. Type 1 subfamily.

The protein resides in the cytoplasm. It catalyses the reaction N-acetyl-L-glutamate 5-semialdehyde + phosphate + NADP(+) = N-acetyl-L-glutamyl 5-phosphate + NADPH + H(+). The protein operates within amino-acid biosynthesis; L-arginine biosynthesis; N(2)-acetyl-L-ornithine from L-glutamate: step 3/4. Its function is as follows. Catalyzes the NADPH-dependent reduction of N-acetyl-5-glutamyl phosphate to yield N-acetyl-L-glutamate 5-semialdehyde. In Paracoccus denitrificans (strain Pd 1222), this protein is N-acetyl-gamma-glutamyl-phosphate reductase.